The primary structure comprises 495 residues: UDP-glycosyltransferase 71B7 (495 aa).

Residues Ser284, 351-353 (APQ), 368-376 (HCGWNSTLE), and 390-393 (YAEQ) contribute to the UDP-alpha-D-glucose site.

Belongs to the UDP-glycosyltransferase family.

The polypeptide is UDP-glycosyltransferase 71B7 (UGT71B7) (Arabidopsis thaliana (Mouse-ear cress)).